The chain runs to 388 residues: Succinate--CoA ligase [ADP-forming] subunit beta (388 aa).

The 237-residue stretch at 9–245 (KELLAKYGLP…KSQENERELK (237 aa)) folds into the ATP-grasp domain. ATP is bound by residues Lys46, 53–55 (GRG), Glu100, Tyr103, and Glu108. Mg(2+) contacts are provided by Asn200 and Asp214. Substrate is bound by residues Asn265 and 322–324 (GIV).

The protein belongs to the succinate/malate CoA ligase beta subunit family. Heterotetramer of two alpha and two beta subunits. Mg(2+) serves as cofactor.

It catalyses the reaction succinate + ATP + CoA = succinyl-CoA + ADP + phosphate. The enzyme catalyses GTP + succinate + CoA = succinyl-CoA + GDP + phosphate. Its pathway is carbohydrate metabolism; tricarboxylic acid cycle; succinate from succinyl-CoA (ligase route): step 1/1. Functionally, succinyl-CoA synthetase functions in the citric acid cycle (TCA), coupling the hydrolysis of succinyl-CoA to the synthesis of either ATP or GTP and thus represents the only step of substrate-level phosphorylation in the TCA. The beta subunit provides nucleotide specificity of the enzyme and binds the substrate succinate, while the binding sites for coenzyme A and phosphate are found in the alpha subunit. This Laribacter hongkongensis (strain HLHK9) protein is Succinate--CoA ligase [ADP-forming] subunit beta.